The sequence spans 574 residues: Glutamate--tRNA ligase (574 aa).

Positions 109–119 (PNPDFVIHMGN) match the 'HIGH' region motif.

The protein belongs to the class-I aminoacyl-tRNA synthetase family. Glutamate--tRNA ligase type 2 subfamily.

It is found in the cytoplasm. The catalysed reaction is tRNA(Glu) + L-glutamate + ATP = L-glutamyl-tRNA(Glu) + AMP + diphosphate. In terms of biological role, catalyzes the attachment of glutamate to tRNA(Glu) in a two-step reaction: glutamate is first activated by ATP to form Glu-AMP and then transferred to the acceptor end of tRNA(Glu). The protein is Glutamate--tRNA ligase of Aeropyrum pernix (strain ATCC 700893 / DSM 11879 / JCM 9820 / NBRC 100138 / K1).